The primary structure comprises 577 residues: MRSHFCTEISEKDVGKIVKVAGWCNTYRDHGGVVFIDLRDKSGLVQLVCDPSSKAYEKALEVRSEFVLVAKGKVRLRGAGLENPKLKTGKIEIVLEELIIENKSATPPIEIGNKHVNEDLRLKYRYLDLRSPNSYEIFKLRSEVALITRNTLAQKGFLEIETPILSKTTPEGARDYLVPSRVHEGEFFALPQSPQLFKQLLMVGGMDRYFQIARCFRDEDLRADRQPEFTQIDAEMSFCDENDVMGVVEDLLQEIFKAVGHTISKPFKRMPYKEAMENYGSDKPDLRFELPLIEVGDCFRDSSNAIFSNTAKDPKNKRIKALNVKGADALFSRSVLKELEEFVRQFGAKGLAYLQIKEDEIKGPLVKFLSEKGLKNILERTDAQVGDIVFFGAGDKKIVLDYMGRLRLKVAETLDLIDKDALNFLWVVNFPMFEKTENGYHAAHHPFTMPKNIECEDIEEVEAHAYDVVLNGVELGGGSIRIHKEEMQKKVFEKINIHEEEAQKKFGFLLEALKFGAPPHGGFAIGFDRLIMLMTKSHSIRDVIAFPKTQKASCLLTNAPSPINEEQLRELHIRLRK.

Residue Glu171 coordinates L-aspartate. The tract at residues 195 to 198 (QLFK) is aspartate. Arg217 contributes to the L-aspartate binding site. ATP-binding positions include 217 to 219 (RDE) and Gln226. L-aspartate is bound at residue His444. Position 474 (Glu474) interacts with ATP. Arg481 contacts L-aspartate. ATP is bound at residue 526-529 (GFDR).

The protein belongs to the class-II aminoacyl-tRNA synthetase family. Type 1 subfamily. Homodimer.

It localises to the cytoplasm. It carries out the reaction tRNA(Asx) + L-aspartate + ATP = L-aspartyl-tRNA(Asx) + AMP + diphosphate. Functionally, aspartyl-tRNA synthetase with relaxed tRNA specificity since it is able to aspartylate not only its cognate tRNA(Asp) but also tRNA(Asn). Is 1.7 times more efficient at aminoacylating tRNA(Asp) over tRNA(Asn). Reaction proceeds in two steps: L-aspartate is first activated by ATP to form Asp-AMP and then transferred to the acceptor end of tRNA(Asp/Asn). This is Aspartate--tRNA(Asp/Asn) ligase from Helicobacter pylori (strain ATCC 700392 / 26695) (Campylobacter pylori).